Here is a 258-residue protein sequence, read N- to C-terminus: Hydroxyethylthiazole kinase (258 aa).

Met-37 lines the substrate pocket. The ATP site is built by Arg-112 and Thr-158. Ala-185 lines the substrate pocket.

Belongs to the Thz kinase family. Mg(2+) serves as cofactor.

It catalyses the reaction 5-(2-hydroxyethyl)-4-methylthiazole + ATP = 4-methyl-5-(2-phosphooxyethyl)-thiazole + ADP + H(+). The protein operates within cofactor biosynthesis; thiamine diphosphate biosynthesis; 4-methyl-5-(2-phosphoethyl)-thiazole from 5-(2-hydroxyethyl)-4-methylthiazole: step 1/1. Its function is as follows. Catalyzes the phosphorylation of the hydroxyl group of 4-methyl-5-beta-hydroxyethylthiazole (THZ). This Rhizobium etli (strain CIAT 652) protein is Hydroxyethylthiazole kinase.